A 145-amino-acid chain; its full sequence is Basic phospholipase A2 beta-bungarotoxin A2 chain (145 aa).

Residues 1–17 form the signal peptide; sequence MLIFLWCGAVCVSLLGA. The propeptide occupies 18–25; the sequence is ANIPPHPL. 6 cysteine pairs are disulfide-bonded: cysteine 52/cysteine 144, cysteine 54/cysteine 70, cysteine 69/cysteine 125, cysteine 76/cysteine 118, cysteine 86/cysteine 111, and cysteine 104/cysteine 116. The Ca(2+) site is built by tyrosine 53, glycine 55, and glycine 57. The active site involves histidine 73. Aspartate 74 is a binding site for Ca(2+). Residue aspartate 119 is part of the active site.

The protein belongs to the phospholipase A2 family. Group I subfamily. D49 sub-subfamily. As to quaternary structure, heterodimer; disulfide-linked. The A chains have phospholipase A2 activity and the B chains show homology with the basic protease inhibitors. The A2 chain is found in beta-3 and beta-4 bungarotoxins. Requires Ca(2+) as cofactor. In terms of tissue distribution, expressed by the venom gland.

The protein localises to the secreted. It catalyses the reaction a 1,2-diacyl-sn-glycero-3-phosphocholine + H2O = a 1-acyl-sn-glycero-3-phosphocholine + a fatty acid + H(+). In terms of biological role, snake venom phospholipase A2 (PLA2) that inhibits neuromuscular transmission by blocking acetylcholine release from the nerve termini. PLA2 catalyzes the calcium-dependent hydrolysis of the 2-acyl groups in 3-sn-phosphoglycerides. This is Basic phospholipase A2 beta-bungarotoxin A2 chain from Bungarus multicinctus (Many-banded krait).